The chain runs to 1317 residues: Immunoglobulin superfamily member 1 (1317 aa).

The N-terminal stretch at 1–20 is a signal peptide; it reads MMLRTFTLLLLCIWLNPGMT. Ig-like C2-type domains lie at 21-112, 114-211, 216-302, 311-398, and 400-481; these read SLAV…KILE, EAPG…KLVV, PKPT…SDIL, PKTW…ATYN, and VELM…HRSK. Residues 21–499 are Extracellular-facing; sequence SLAVESQPEL…GFLTWNSILN (479 aa). N-linked (GlcNAc...) asparagine glycosylation is present at N43. A disulfide bridge links C48 with C96. A disulfide bridge connects residues C238 and C286. N-linked (GlcNAc...) asparagine glycans are attached at residues N328 and N371. 2 cysteine pairs are disulfide-bonded: C333-C382 and C422-C465. The helical transmembrane segment at 500 to 520 threads the bilayer; it reads EAVRVSLTMQLASLLLLVVWI. Residues 521-531 are Cytoplasmic-facing; that stretch reads RWKCRRLRLRE. Residues 532 to 552 traverse the membrane as a helical segment; that stretch reads AWLLGTAQGVAMLFILMALLC. Residues 553 to 1317 lie on the Extracellular side of the membrane; sequence CGLCNGALTE…EVSVELTVPI (765 aa). Ig-like C2-type domains lie at 570 to 658, 659 to 753, 758 to 850, 854 to 938, 946 to 1041, 1046 to 1131, and 1142 to 1223; these read TPKP…ALEL, VGTD…ELVI, PKPF…LVVT, PKPT…SSLS, TDTF…ELIV, PKPS…NHSN, and PKPS…EPSD. An intrachain disulfide couples C780 to C830. N-linked (GlcNAc...) asparagine glycosylation occurs at N871. Residues C876 and C923 are joined by a disulfide bond. 2 N-linked (GlcNAc...) asparagine glycosylation sites follow: N967 and N1063. Cystine bridges form between C1068–C1115 and C1164–C1207. The interval 1290-1310 is disordered; the sequence is NQEGEPGTTTNSPSSASQEVS. Positions 1296–1309 are enriched in polar residues; sequence GTTTNSPSSASQEV.

In terms of assembly, interacts with INHA; the interaction is not confirmed by standard receptor binding assays. Interacts with ACVR1B; the interaction appears to be ligand-dependent as it is diminished by inhibin B and activin A. Interacts with ACVR2A, ACVR2B, ACVRL1 and BMPR1B. Interacts with HECTD1.

The protein resides in the membrane. It is found in the secreted. Functionally, seems to be a coreceptor in inhibin signaling, but seems not to be a high-affinity inhibin receptor. Antagonizes activin A signaling in the presence or absence of inhibin B. Necessary to mediate a specific antagonistic effect of inhibin B on activin-stimulated transcription. In Mus musculus (Mouse), this protein is Immunoglobulin superfamily member 1 (Igsf1).